A 41-amino-acid polypeptide reads, in one-letter code: Large ribosomal subunit protein bL36 (41 aa).

It belongs to the bacterial ribosomal protein bL36 family.

The chain is Large ribosomal subunit protein bL36 from Rhodopseudomonas palustris (strain TIE-1).